Reading from the N-terminus, the 147-residue chain is DNA-directed RNA polymerase RPB6 homolog (147 aa).

Belongs to the archaeal RpoK/eukaryotic RPB6 RNA polymerase subunit family. Part of the viral DNA-directed RNA polymerase that consists of 8 polII-like subunits (RPB1, RPB2, RPB3, RPB5, RPB6, RPB7, RPB9, RPB10), a capping enzyme and a termination factor.

Its subcellular location is the host cytoplasm. It is found in the virion. Functionally, component of the DNA-directed RNA polymerase (RNAP) that catalyzes the transcription in the cytoplasm of viral DNA into RNA using the four ribonucleoside triphosphates as substrates. The sequence is that of DNA-directed RNA polymerase RPB6 homolog from Ornithodoros (relapsing fever ticks).